Here is a 501-residue protein sequence, read N- to C-terminus: Aldehyde dehydrogenase, cytosolic 1 (501 aa).

Residue 246 to 251 coordinates NAD(+); sequence GSTEVG. Glu-269 serves as the catalytic Proton acceptor. Residue Cys-303 is the Nucleophile of the active site.

It belongs to the aldehyde dehydrogenase family. In terms of assembly, homotetramer. As to expression, eye specific, with very high expression in the lens.

Its subcellular location is the cytoplasm. It catalyses the reaction an aldehyde + NAD(+) + H2O = a carboxylate + NADH + 2 H(+). Its pathway is alcohol metabolism; ethanol degradation; acetate from ethanol: step 2/2. Its function is as follows. Major component of the eye of elephant shrews, which in contrast to other mammals, possesses both a lens- and a non-lens class-1 aldehyde dehydrogenase 1. This eye-specific form is a structural protein of the lens and, in other part of the eye, serves as the major form of ALDH1. Can convert/oxidize retinaldehyde to retinoic acid. This is Aldehyde dehydrogenase, cytosolic 1 (ALDH1) from Macroscelides proboscideus (Short-eared elephant shrew).